A 57-amino-acid chain; its full sequence is COP9 signalosome complex subunit 9 (57 aa).

A Phosphothreonine modification is found at Thr26.

This sequence belongs to the CSN9 family. In terms of assembly, component of the CSN complex, composed of COPS1/GPS1, COPS2, COPS3, COPS4, COPS5, COPS6, COPS7 (COPS7A or COPS7B), COPS8 and COPS9. In the complex, it interacts directly with COPS3, COPS5 and COPS6.

It localises to the nucleus. It is found in the cytoplasm. The protein resides in the nucleoplasm. Its function is as follows. Component of the COP9 signalosome complex (CSN), a complex involved in various cellular and developmental processes. The CSN complex is an essential regulator of the ubiquitin (Ubl) conjugation pathway by mediating the deneddylation of the cullin subunits of SCF-type E3 ligase complexes, leading to decrease the Ubl ligase activity of SCF-type complexes such as SCF, CSA or DDB2. The complex is also involved in phosphorylation of p53/TP53, c-jun/JUN, IkappaBalpha/NFKBIA, ITPK1 and IRF8/ICSBP, possibly via its association with CK2 and PKD kinases. CSN-dependent phosphorylation of TP53 and JUN promotes and protects degradation by the Ubl system, respectively. Plays a role in cell proliferation. This chain is COP9 signalosome complex subunit 9, found in Bos taurus (Bovine).